We begin with the raw amino-acid sequence, 171 residues long: uncharacterized protein (171 aa).

The interval 139-171 (ARKPTKSDDEEEEVGKMGGISSSINSWVQRQKL) is disordered. The segment covering 158 to 171 (ISSSINSWVQRQKL) has biased composition (polar residues).

This is an uncharacterized protein from Caenorhabditis elegans.